The chain runs to 401 residues: tRNA(Ile)-lysidine synthase (401 aa).

Residue 17–22 (SGGPDS) participates in ATP binding.

It belongs to the tRNA(Ile)-lysidine synthase family.

It localises to the cytoplasm. The catalysed reaction is cytidine(34) in tRNA(Ile2) + L-lysine + ATP = lysidine(34) in tRNA(Ile2) + AMP + diphosphate + H(+). Its function is as follows. Ligates lysine onto the cytidine present at position 34 of the AUA codon-specific tRNA(Ile) that contains the anticodon CAU, in an ATP-dependent manner. Cytidine is converted to lysidine, thus changing the amino acid specificity of the tRNA from methionine to isoleucine. This chain is tRNA(Ile)-lysidine synthase, found in Mycoplasma mycoides subsp. mycoides SC (strain CCUG 32753 / NCTC 10114 / PG1).